A 160-amino-acid polypeptide reads, in one-letter code: Eukaryotic translation initiation factor 5A-3 (160 aa).

Over residues 1 to 12 the composition is skewed to basic and acidic residues; it reads MSDEEHHFESKA. The segment at 1–21 is disordered; that stretch reads MSDEEHHFESKADAGASKTYP. At Lys52 the chain carries Hypusine.

It belongs to the eIF-5A family. In terms of processing, lys-52 undergoes hypusination, a unique post-translational modification that consists in the addition of a butylamino group from spermidine to lysine side chain, leading to the formation of the unusual amino acid hypusine. eIF-5As are the only known proteins to undergo this modification, which is essential for their function.

Translation factor that promotes translation elongation and termination, particularly upon ribosome stalling at specific amino acid sequence contexts. Binds between the exit (E) and peptidyl (P) site of the ribosome and promotes rescue of stalled ribosome: specifically required for efficient translation of polyproline-containing peptides as well as other motifs that stall the ribosome. Acts as a ribosome quality control (RQC) cofactor by joining the RQC complex to facilitate peptidyl transfer during CAT tailing step. The polypeptide is Eukaryotic translation initiation factor 5A-3 (EIF5A3) (Solanum tuberosum (Potato)).